The chain runs to 298 residues: Protoheme IX farnesyltransferase 1 (298 aa).

Helical transmembrane passes span Q21–F41, S43–A63, K94–F114, L118–L138, Y144–V164, F168–W188, T215–F235, L236–I256, and F274–I294.

Belongs to the UbiA prenyltransferase family. Protoheme IX farnesyltransferase subfamily.

The protein localises to the cell membrane. The catalysed reaction is heme b + (2E,6E)-farnesyl diphosphate + H2O = Fe(II)-heme o + diphosphate. It functions in the pathway porphyrin-containing compound metabolism; heme O biosynthesis; heme O from protoheme: step 1/1. Its function is as follows. Converts heme B (protoheme IX) to heme O by substitution of the vinyl group on carbon 2 of heme B porphyrin ring with a hydroxyethyl farnesyl side group. This Picrophilus torridus (strain ATCC 700027 / DSM 9790 / JCM 10055 / NBRC 100828 / KAW 2/3) protein is Protoheme IX farnesyltransferase 1.